The following is a 144-amino-acid chain: RNA-binding protein 1 (144 aa).

The region spanning 11–84 (CKVYVGNLGS…TRIRVEMSSG (74 aa)) is the RRM domain. Residues 78–115 (RVEMSSGRSRDRRRGEGGSSGRSGSGRYRITPSARTTS) are disordered.

The protein belongs to the splicing factor SR family. Interacts with x16 (via Arg/Ser-rich region). Post-translationally, extensively phosphorylated on serine residues in the RS domain. In terms of processing, the tandem heptapeptide repeats in the C-terminal domain (CTD) can be highly phosphorylated. The phosphorylation activates Pol II. Phosphorylation occurs at residues 'Ser-2', 'Ser-5' and 'Ser-7' of the heptapeptide repeat and is mediated by P-TEFb. Dephosphorylated by the INTAC complex when transcripts are unfavorably configured for transcriptional elongation, leading to premature transcription termination: dephosphorylation is mediated by the mts/PP2A component of the INTAC complex. Ubiquitous.

Its subcellular location is the nucleus. Functionally, contributes to the activation of female-specific DSX splicing in vivo by recognizing the RBP1 target sequences within the purine-rich polypyrimidine tract of the female-specific 3' splice site. The sequence is that of RNA-binding protein 1 (Rbp1) from Drosophila melanogaster (Fruit fly).